A 96-amino-acid chain; its full sequence is Pore-forming peptide amoebapore B (96 aa).

The first 19 residues, methionine 1–glutamate 19, serve as a signal peptide directing secretion. In terms of domain architecture, Saposin B-type spans glycine 20–cysteine 96. Intrachain disulfides connect cysteine 24/cysteine 96, cysteine 27/cysteine 90, and cysteine 54/cysteine 65.

Monomer. Homodimer. Hexamer; formed during insertion in the membrane.

Its subcellular location is the cytoplasmic granule. Forms pores in the cell membrane of host cells. Has antibacterial activity against M.luteus, no activity against E.coli. Implicated in the cytolytic activity of the parasite. In Entamoeba histolytica (strain ATCC 30459 / HM-1:IMSS / ABRM), this protein is Pore-forming peptide amoebapore B.